Here is a 262-residue protein sequence, read N- to C-terminus: L-aspartate dehydrogenase (262 aa).

NAD(+)-binding residues include A128 and N183. H213 is a catalytic residue.

This sequence belongs to the L-aspartate dehydrogenase family.

It catalyses the reaction L-aspartate + NADP(+) + H2O = oxaloacetate + NH4(+) + NADPH + H(+). The enzyme catalyses L-aspartate + NAD(+) + H2O = oxaloacetate + NH4(+) + NADH + H(+). It participates in cofactor biosynthesis; NAD(+) biosynthesis; iminoaspartate from L-aspartate (dehydrogenase route): step 1/1. Its function is as follows. Specifically catalyzes the NAD or NADP-dependent dehydrogenation of L-aspartate to iminoaspartate. The polypeptide is L-aspartate dehydrogenase (Methanopyrus kandleri (strain AV19 / DSM 6324 / JCM 9639 / NBRC 100938)).